We begin with the raw amino-acid sequence, 385 residues long: DNA replication and repair protein RecF (385 aa).

30–37 (GPNGYGKT) contacts ATP.

This sequence belongs to the RecF family.

It is found in the cytoplasm. In terms of biological role, the RecF protein is involved in DNA metabolism; it is required for DNA replication and normal SOS inducibility. RecF binds preferentially to single-stranded, linear DNA. It also seems to bind ATP. The chain is DNA replication and repair protein RecF from Mycobacterium bovis (strain ATCC BAA-935 / AF2122/97).